The following is a 224-amino-acid chain: Inner membrane-spanning protein YciB (224 aa).

Helical transmembrane passes span 20-40, 61-81, 86-106, 123-143, 156-176, and 187-207; these read GVNP…FFFA, IFVA…ASWL, LPIM…LTLY, LFGG…GYVF, KLTF…EVVW, and FKVW…MPLI.

It belongs to the YciB family.

Its subcellular location is the cell inner membrane. Plays a role in cell envelope biogenesis, maintenance of cell envelope integrity and membrane homeostasis. This Mesorhizobium japonicum (strain LMG 29417 / CECT 9101 / MAFF 303099) (Mesorhizobium loti (strain MAFF 303099)) protein is Inner membrane-spanning protein YciB.